Reading from the N-terminus, the 128-residue chain is Protein yippee-like At3g08990 (128 aa).

The region spanning 12-109 (LVYSCKYCQT…LERFKVLGPY (98 aa)) is the Yippee domain. C16, C19, C72, and C75 together coordinate Zn(2+).

The protein belongs to the yippee family.

The polypeptide is Protein yippee-like At3g08990 (Arabidopsis thaliana (Mouse-ear cress)).